Reading from the N-terminus, the 469-residue chain is Tryptophan biosynthesis protein TrpCF (469 aa).

The tract at residues 1–271 (MSEQLSEHIS…LAVRKIVLGE (271 aa)) is indole-3-glycerol phosphate synthase. The interval 272–469 (HKVCGLTHPD…QQVFQQLRNY (198 aa)) is N-(5'-phosphoribosyl)anthranilate isomerase.

In the N-terminal section; belongs to the TrpC family. It in the C-terminal section; belongs to the TrpF family. In terms of assembly, monomer.

The enzyme catalyses N-(5-phospho-beta-D-ribosyl)anthranilate = 1-(2-carboxyphenylamino)-1-deoxy-D-ribulose 5-phosphate. It carries out the reaction 1-(2-carboxyphenylamino)-1-deoxy-D-ribulose 5-phosphate + H(+) = (1S,2R)-1-C-(indol-3-yl)glycerol 3-phosphate + CO2 + H2O. It participates in amino-acid biosynthesis; L-tryptophan biosynthesis; L-tryptophan from chorismate: step 3/5. Its pathway is amino-acid biosynthesis; L-tryptophan biosynthesis; L-tryptophan from chorismate: step 4/5. In terms of biological role, bifunctional enzyme that catalyzes two sequential steps of tryptophan biosynthetic pathway. The first reaction is catalyzed by the isomerase, coded by the TrpF domain; the second reaction is catalyzed by the synthase, coded by the TrpC domain. In Vibrio cholerae serotype O1 (strain ATCC 39315 / El Tor Inaba N16961), this protein is Tryptophan biosynthesis protein TrpCF (trpCF).